We begin with the raw amino-acid sequence, 729 residues long: Fatty acid oxidation complex subunit alpha (729 aa).

The tract at residues 1-189 is enoyl-CoA hydratase/isomerase; sequence MLYKGDTLYL…KIGLVDGVVK (189 aa). Substrate is bound at residue D296. The tract at residues 311 to 729 is 3-hydroxyacyl-CoA dehydrogenase; it reads ETPKQAAVLG…ARLVGDLKTA (419 aa). Residues M324, D343, 400–402, K407, and S429 each bind NAD(+); that span reads VVE. Catalysis depends on H450, which acts as the For 3-hydroxyacyl-CoA dehydrogenase activity. N453 is an NAD(+) binding site. Positions 500 and 660 each coordinate substrate.

This sequence in the N-terminal section; belongs to the enoyl-CoA hydratase/isomerase family. In the C-terminal section; belongs to the 3-hydroxyacyl-CoA dehydrogenase family. As to quaternary structure, heterotetramer of two alpha chains (FadB) and two beta chains (FadA).

It carries out the reaction a (3S)-3-hydroxyacyl-CoA + NAD(+) = a 3-oxoacyl-CoA + NADH + H(+). The catalysed reaction is a (3S)-3-hydroxyacyl-CoA = a (2E)-enoyl-CoA + H2O. It catalyses the reaction a 4-saturated-(3S)-3-hydroxyacyl-CoA = a (3E)-enoyl-CoA + H2O. The enzyme catalyses (3S)-3-hydroxybutanoyl-CoA = (3R)-3-hydroxybutanoyl-CoA. It carries out the reaction a (3Z)-enoyl-CoA = a 4-saturated (2E)-enoyl-CoA. The catalysed reaction is a (3E)-enoyl-CoA = a 4-saturated (2E)-enoyl-CoA. Its pathway is lipid metabolism; fatty acid beta-oxidation. Involved in the aerobic and anaerobic degradation of long-chain fatty acids via beta-oxidation cycle. Catalyzes the formation of 3-oxoacyl-CoA from enoyl-CoA via L-3-hydroxyacyl-CoA. It can also use D-3-hydroxyacyl-CoA and cis-3-enoyl-CoA as substrate. The protein is Fatty acid oxidation complex subunit alpha of Escherichia coli (strain SE11).